Consider the following 126-residue polypeptide: Small ribosomal subunit protein eS6 (126 aa).

Belongs to the eukaryotic ribosomal protein eS6 family.

The chain is Small ribosomal subunit protein eS6 from Thermococcus sibiricus (strain DSM 12597 / MM 739).